The primary structure comprises 384 residues: Aurora kinase (384 aa).

Polar residues-rich tracts occupy residues 1-12 (MSYPNNKENSNN) and 19-29 (SVPSKQPQRVL). The interval 1–100 (MSYPNNKENS…SSSSSSSQSV (100 aa)) is disordered. Over residues 30–99 (QQQNTNINNH…SSSSSSSSQS (70 aa)) the composition is skewed to low complexity. The Protein kinase domain occupies 110–360 (FDIGKLLGMG…LKDVINHPWI (251 aa)). Residues 116–124 (LGMGRFGHV) and lysine 139 each bind ATP. Aspartate 233 serves as the catalytic Proton acceptor.

This sequence belongs to the protein kinase superfamily. Ser/Thr protein kinase family. Aurora subfamily. Interacts with icpA. Forms a complex at the central spindle.

It is found in the cytoplasm. The protein localises to the chromosome. The protein resides in the centromere. Its subcellular location is the cytoskeleton. It localises to the spindle pole. It is found in the cleavage furrow. The protein localises to the cell projection. The protein resides in the neuron projection. The catalysed reaction is L-seryl-[protein] + ATP = O-phospho-L-seryl-[protein] + ADP + H(+). It catalyses the reaction L-threonyl-[protein] + ATP = O-phospho-L-threonyl-[protein] + ADP + H(+). Its function is as follows. Part of a chromosomal passenger complex. The sequence is that of Aurora kinase (aurK) from Dictyostelium discoideum (Social amoeba).